The sequence spans 164 residues: Lipoprotein signal peptidase (164 aa).

A run of 3 helical transmembrane segments spans residues 12 to 32, 70 to 90, and 102 to 122; these read WLWL…LILQ, WFFA…MYRL, and ALII…GFVV. Catalysis depends on residues aspartate 123 and aspartate 141. Residues 137–157 form a helical membrane-spanning segment; the sequence is FNLADTAICVGAALIVLEGFL.

The protein belongs to the peptidase A8 family.

It is found in the cell inner membrane. It catalyses the reaction Release of signal peptides from bacterial membrane prolipoproteins. Hydrolyzes -Xaa-Yaa-Zaa-|-(S,diacylglyceryl)Cys-, in which Xaa is hydrophobic (preferably Leu), and Yaa (Ala or Ser) and Zaa (Gly or Ala) have small, neutral side chains.. It participates in protein modification; lipoprotein biosynthesis (signal peptide cleavage). Functionally, this protein specifically catalyzes the removal of signal peptides from prolipoproteins. The sequence is that of Lipoprotein signal peptidase from Shigella boydii serotype 4 (strain Sb227).